The primary structure comprises 1000 residues: uncharacterized protein (1000 aa).

The span at 787-809 shows a compositional bias: basic and acidic residues; sequence RQYEKLKRQRAKSETERHQERHG. The tract at residues 787 to 812 is disordered; that stretch reads RQYEKLKRQRAKSETERHQERHGKLS.

This is an uncharacterized protein from Picosynechococcus sp. (strain ATCC 27264 / PCC 7002 / PR-6) (Agmenellum quadruplicatum).